Here is a 251-residue protein sequence, read N- to C-terminus: 4-hydroxy-tetrahydrodipicolinate reductase (251 aa).

8-13 is an NAD(+) binding site; that stretch reads GALGRM. Arginine 36 provides a ligand contact to NADP(+). Residues 89–91 and 113–116 each bind NAD(+); these read GTT and TTNF. Histidine 145 acts as the Proton donor/acceptor in catalysis. Histidine 146 contributes to the (S)-2,3,4,5-tetrahydrodipicolinate binding site. The Proton donor role is filled by lysine 149. (S)-2,3,4,5-tetrahydrodipicolinate is bound at residue 155–156; sequence GT.

Belongs to the DapB family.

The protein localises to the cytoplasm. It catalyses the reaction (S)-2,3,4,5-tetrahydrodipicolinate + NAD(+) + H2O = (2S,4S)-4-hydroxy-2,3,4,5-tetrahydrodipicolinate + NADH + H(+). The catalysed reaction is (S)-2,3,4,5-tetrahydrodipicolinate + NADP(+) + H2O = (2S,4S)-4-hydroxy-2,3,4,5-tetrahydrodipicolinate + NADPH + H(+). It functions in the pathway amino-acid biosynthesis; L-lysine biosynthesis via DAP pathway; (S)-tetrahydrodipicolinate from L-aspartate: step 4/4. Its function is as follows. Catalyzes the conversion of 4-hydroxy-tetrahydrodipicolinate (HTPA) to tetrahydrodipicolinate. The polypeptide is 4-hydroxy-tetrahydrodipicolinate reductase (Methanocorpusculum labreanum (strain ATCC 43576 / DSM 4855 / Z)).